Reading from the N-terminus, the 126-residue chain is Iron-sulfur cluster insertion protein ErpA (126 aa).

The tract at residues 1-21 (MNQPANQFNPSSSQPVDPTVL) is disordered. Residues Cys-54, Cys-118, and Cys-120 each contribute to the iron-sulfur cluster site.

The protein belongs to the HesB/IscA family. As to quaternary structure, homodimer. Iron-sulfur cluster is required as a cofactor.

Its function is as follows. Required for insertion of 4Fe-4S clusters for at least IspG. The chain is Iron-sulfur cluster insertion protein ErpA from Psychrobacter arcticus (strain DSM 17307 / VKM B-2377 / 273-4).